The following is a 932-amino-acid chain: AP-3 complex subunit delta (932 aa).

Position 2 is an N-acetylthreonine (threonine 2). 12 HEAT repeats span residues 157 to 194 (SLAR…QYPE), 196 to 231 (LRDN…KNPQ), 233 to 269 (FIQL…VEPK), 270 to 307 (LRAK…LEED), 310 to 346 (ETAM…KINT), 347 to 384 (DFIS…EDNL), 386 to 425 (AIVQ…ENYK), 427 to 466 (KMVN…DISD), 490 to 527 (VTIA…TLVE), 528 to 564 (NGND…NWCN), 570 to 601 (KRFE…ERSV), and 602 to 638 (EVLE…AYEL). 2 positions are modified to phosphoserine: serine 700 and serine 727. Residues 720–868 (EREKERMSNP…EEGNLRKEDE (149 aa)) form a disordered region. Composition is skewed to basic and acidic residues over residues 738-747 (ERTKNSKDLL) and 755-766 (SDKKPETIRLNR). The residue at position 767 (threonine 767) is a Phosphothreonine. Low complexity predominate over residues 767–779 (TDNSLNSLSLSTT). Phosphoserine occurs at positions 770 and 773. The span at 783-793 (RKKKKGKKKNR) shows a compositional bias: basic residues. Serine 798 bears the Phosphoserine mark. The segment covering 806 to 832 (APKRKDAFQKPHDNHSTQNPLKKDKIN) has biased composition (basic and acidic residues). The span at 838 to 855 (QLENFDFSNFGQSSNAGR) shows a compositional bias: polar residues. Residues 857-868 (SQEEGNLRKEDE) show a composition bias toward basic and acidic residues. Residues 858-878 (QEEGNLRKEDELELSRLEANL) adopt a coiled-coil conformation. Residue serine 888 is modified to Phosphoserine. A compositionally biased stretch (basic residues) spans 897-915 (KKKKKGKKSKSKNKLKTKA). Positions 897–932 (KKKKKGKKSKSKNKLKTKAKNSPEPNEFLRDQSTDI) are disordered. Phosphoserine is present on serine 918. Residues 923–932 (EFLRDQSTDI) show a composition bias toward basic and acidic residues.

Belongs to the adaptor complexes large subunit family. As to quaternary structure, adaptor protein complex 3 (AP-3) is a heterotetramer composed of 2 large adaptins (APL5 and APL6), a medium adaptin (APM3) and a small adaptin (APS3). Interacts with VPS41.

It is found in the golgi apparatus. It localises to the cytoplasmic vesicle. The protein resides in the clathrin-coated vesicle membrane. Functionally, part of the AP-3 complex, an adaptor-related complex which is not clathrin-associated. The complex is associated with the Golgi region as well as more peripheral structures. It facilitates the budding of vesicles from the Golgi membrane and may be directly involved in trafficking to the vacuole. Required for the transport via the ALP pathway, which directs the transport of the cargo proteins PHO8 and VAM3 to the vacuole. This chain is AP-3 complex subunit delta (APL5), found in Saccharomyces cerevisiae (strain ATCC 204508 / S288c) (Baker's yeast).